The sequence spans 297 residues: Protoheme IX farnesyltransferase 1 (297 aa).

Helical transmembrane passes span 23-43 (VVVL…RAGV), 45-65 (WSVL…AAVV), 93-113 (LPAL…LLAF), 117-137 (LTAW…TGFL), 145-165 (IVIG…AVSG), 171-191 (PLLL…ALAI), 216-236 (LHIL…YAIH), 241-261 (LYLA…WVLY), and 277-297 (IAYL…LLNL).

This sequence belongs to the UbiA prenyltransferase family. Protoheme IX farnesyltransferase subfamily.

It is found in the cell inner membrane. The enzyme catalyses heme b + (2E,6E)-farnesyl diphosphate + H2O = Fe(II)-heme o + diphosphate. It functions in the pathway porphyrin-containing compound metabolism; heme O biosynthesis; heme O from protoheme: step 1/1. In terms of biological role, converts heme B (protoheme IX) to heme O by substitution of the vinyl group on carbon 2 of heme B porphyrin ring with a hydroxyethyl farnesyl side group. The protein is Protoheme IX farnesyltransferase 1 of Pseudomonas putida (strain GB-1).